The sequence spans 30 residues: 2-enoate reductase (30 aa).

In terms of assembly, dodecamer; tetramer of trimers. The cofactor is iron-sulfur cluster. Requires FAD as cofactor. FMN is required as a cofactor.

The catalysed reaction is butanoate + NAD(+) = (2E)-2-butenoate + NADH + H(+). In terms of biological role, involved in fermentation of amino acids (Stickland reaction) such as leucine, isoleucine, valine and phenylalanine. This chain is 2-enoate reductase, found in Clostridium tyrobutyricum.